Consider the following 480-residue polypeptide: Heparin cofactor 2 (480 aa).

Positions 1-19 (MQHRPHLLLISLTIMSVCG) are cleaved as a signal peptide. A glycan (N-linked (GlcNAc...) asparagine) is linked at N32. A run of 2 repeats spans residues 56–66 (GEEDDDYLDLE) and 70–80 (SEDDDYIDIID). A 2 X 11 AA approximate repeats, Asp/Glu-rich (acidic) (hirudin-like) region spans residues 56–80 (GEEDDDYLDLEKLLSEDDDYIDIID). Y62 and Y75 each carry sulfotyrosine. An N-linked (GlcNAc...) asparagine glycan is attached at N169. The interval 173-193 (KYEILTIHNLFRKLTHRLFRR) is glycosaminoglycan-binding site. Residues N368 and N404 are each glycosylated (N-linked (GlcNAc...) asparagine).

The protein belongs to the serpin family. In terms of processing, N-glycosylated; different glycan composition appears to lead to two forms of this protein (56 and 60 kDa).

Functionally, thrombin inhibitor activated by the glycosaminoglycans, heparin or dermatan sulfate. In the presence of the latter, HC-II becomes the predominant thrombin inhibitor in place of antithrombin III (AT). The polypeptide is Heparin cofactor 2 (SERPIND1) (Oryctolagus cuniculus (Rabbit)).